The primary structure comprises 1524 residues: Protein dispatched homolog 1 (1524 aa).

N-linked (GlcNAc...) asparagine glycosylation occurs at Asn-59. The next 4 helical transmembrane spans lie at 190 to 210, 500 to 520, 525 to 545, and 549 to 569; these read VVVL…GVLV, LLMD…VMCV, MFIT…SYFL, and VFHF…LVGI. The SSD domain occupies 486 to 658; the sequence is GIEFGIKHSL…VTWLPAVVVL (173 aa). Asn-582 carries an N-linked (GlcNAc...) asparagine glycan. 8 helical membrane-spanning segments follow: residues 604-624, 638-658, 719-739, 988-1008, 1010-1030, 1040-1060, 1079-1099, and 1107-1127; these read AALS…ANYV, GTAI…VVVL, YLWL…VCIN, MGLS…NIII, LYAI…LVLL, VTIS…GVAY, VGSA…MMMP, and QLGT…TFFF.

It belongs to the dispatched family. As to quaternary structure, interacts with SHH via the cholesterol anchor of the dually lipid-modified SHH (ShhNp).

It is found in the membrane. In terms of biological role, functions in hedgehog (Hh) signaling. Regulates the release and extracellular accumulation of cholesterol-modified hedgehog proteins and is hence required for effective production of the Hh signal. Synergizes with SCUBE2 to cause an increase in SHH secretion. This is Protein dispatched homolog 1 (DISP1) from Homo sapiens (Human).